The sequence spans 312 residues: Protoheme IX farnesyltransferase (312 aa).

The next 9 membrane-spanning stretches (helical) occupy residues 31–51 (LLMK…GLFI), 58–78 (PLLS…AGAI), 107–127 (TALT…AICV), 130–150 (ISSI…TMWL), 157–177 (NIVI…SAVT), 184–204 (CLML…TLSL), 229–249 (YSIL…YFTD), 250–270 (IAGL…LCYA), and 286–306 (FKYS…EHCI).

This sequence belongs to the UbiA prenyltransferase family. Protoheme IX farnesyltransferase subfamily.

Its subcellular location is the cell inner membrane. It carries out the reaction heme b + (2E,6E)-farnesyl diphosphate + H2O = Fe(II)-heme o + diphosphate. The protein operates within porphyrin-containing compound metabolism; heme O biosynthesis; heme O from protoheme: step 1/1. Its function is as follows. Converts heme B (protoheme IX) to heme O by substitution of the vinyl group on carbon 2 of heme B porphyrin ring with a hydroxyethyl farnesyl side group. The protein is Protoheme IX farnesyltransferase of Orientia tsutsugamushi (strain Ikeda) (Rickettsia tsutsugamushi).